Consider the following 423-residue polypeptide: MAQFIDRRLNGKNKSAVNRQRFMRRYKEQIKESVADAVNRRSITNTETGEDVAIPHKDIKEPLFHQGKGGLRERVHPGNDQFITGDKIERPKGGQGGGGAGDGDASADGEGQDDFVFQISKDEYLDLLFEDLALPNLKKNQVNKITEWKKHRAGYQTAGMPSNISIVRSLQQSLARRTAMSAGKKRLLHELELELERIQNQEPAQKLEEMKLKQEIAELRKAIESVPFIDTFDLRFKNYERKPVPSSQAVMFCLMDVSGSMDQATKDIAKRFYVLLYLFLNRTYENVEVVFIRHHTQAKEVDEHEFFYSQETGGTIVSSALKLMDEIVKARYPVGEWNIYAAQASDGDNWADDSPRCKELLTNKLLPNCQYYAYIEITRRSHQTLWHEYEKLEESFDNFAMKNIRSVEDIFPVFRELFHKETA.

The interval 81-111 (QFITGDKIERPKGGQGGGGAGDGDASADGEG) is disordered. Residues 93–102 (GGQGGGGAGD) show a composition bias toward gly residues.

Belongs to the UPF0229 family.

This Vibrio vulnificus (strain YJ016) protein is UPF0229 protein VV2350.